The primary structure comprises 334 residues: DnaJ protein homolog 1 (334 aa).

The 65-residue stretch at 4–68 folds into the J domain; sequence DFYKILGLER…KKRDIFDNYG (65 aa). A Phosphoserine modification is found at Ser187.

The protein localises to the cytoplasm. This Drosophila melanogaster (Fruit fly) protein is DnaJ protein homolog 1 (DnaJ-1).